The primary structure comprises 80 residues: Sulfur carrier protein TusA (80 aa).

Catalysis depends on Cys17, which acts as the Cysteine persulfide intermediate.

It belongs to the sulfur carrier protein TusA family.

It is found in the cytoplasm. Functionally, sulfur carrier protein which probably makes part of a sulfur-relay system. The sequence is that of Sulfur carrier protein TusA from Pseudomonas entomophila (strain L48).